We begin with the raw amino-acid sequence, 901 residues long: HTH-type transcriptional regulator MalT (901 aa).

39–46 lines the ATP pocket; it reads SPAGYGKT. One can recognise an HTH luxR-type domain in the interval 829–894; the sequence is ELIRTSPLTQ…AAVQHAQKLL (66 aa). The H-T-H motif DNA-binding region spans 853–872; the sequence is NEQIAGELEVAATTIKTHIR.

This sequence belongs to the MalT family. As to quaternary structure, monomer in solution. Oligomerizes to an active state in the presence of the positive effectors ATP and maltotriose.

Its activity is regulated as follows. Activated by ATP and maltotriose, which are both required for DNA binding. Functionally, positively regulates the transcription of the maltose regulon whose gene products are responsible for uptake and catabolism of malto-oligosaccharides. Specifically binds to the promoter region of its target genes, recognizing a short DNA motif called the MalT box. The polypeptide is HTH-type transcriptional regulator MalT (Escherichia coli O6:K15:H31 (strain 536 / UPEC)).